Reading from the N-terminus, the 306-residue chain is 4-diphosphocytidyl-2-C-methyl-D-erythritol kinase (306 aa).

Lysine 23 is a catalytic residue. Position 108-118 (108-118 (PIAAGIGGGSA)) interacts with ATP. Aspartate 150 is a catalytic residue.

The protein belongs to the GHMP kinase family. IspE subfamily.

It carries out the reaction 4-CDP-2-C-methyl-D-erythritol + ATP = 4-CDP-2-C-methyl-D-erythritol 2-phosphate + ADP + H(+). It functions in the pathway isoprenoid biosynthesis; isopentenyl diphosphate biosynthesis via DXP pathway; isopentenyl diphosphate from 1-deoxy-D-xylulose 5-phosphate: step 3/6. Functionally, catalyzes the phosphorylation of the position 2 hydroxy group of 4-diphosphocytidyl-2C-methyl-D-erythritol. The sequence is that of 4-diphosphocytidyl-2-C-methyl-D-erythritol kinase from Rhodopseudomonas palustris (strain BisB18).